A 343-amino-acid polypeptide reads, in one-letter code: Zinc finger CCCH domain-containing protein 1 (343 aa).

A disordered region spans residues 1 to 102; the sequence is MSDSGEPKPS…PERSVFHYDS (102 aa). Positions 7–25 are enriched in low complexity; the sequence is PKPSQQEEPLPQPAAQETQ. Residues 35–44 are compositionally biased toward basic residues; sequence KPTKSKNIRK. Low complexity predominate over residues 79-91; that stretch reads SSGPSKSSTTTSG. A C3H1-type zinc finger spans residues 200-228; it reads DYQPDICKDYKETGYCGYGDSCKFLHDRG. The interval 249-268 is disordered; that stretch reads RNKAMGVEDEDDEADKDSDE. Residues 255-268 are compositionally biased toward acidic residues; the sequence is VEDEDDEADKDSDE. An RING-type zinc finger spans residues 277–315; that stretch reads CFICREPFVDPVVTKCKHYFCEHCALKHHTKNKKCFVCN.

This chain is Zinc finger CCCH domain-containing protein 1, found in Arabidopsis thaliana (Mouse-ear cress).